Consider the following 545-residue polypeptide: MLPINNNFSLPQNSFYNTISGTYADYFSAWDKWEKQALPGEERDEAVSRLKECLINNSDELRLDRLNLSSLPDNLPAQITLLNVSYNQLTNLPELPVTLKKLYSASNKLSELPVLPPALESLQVQHNELENLPALPDSLLTMNISYNEIVSLPSLPQALKNLRATRNFLTELPAFSEGNNPVVREYFFDRNQISHIPESILNLRNECSIHISDNPLSSHALQALQRLTSSPDYHGPRIYFSMSDGQQNTLHRPLADAVTAWFPENKQSDVSQIWHAFEHEEHANTFSAFLDRLSDTVSARNTSGFREQVAAWLEKLSASAELRQQSFAVAADATESCEDRVALTWNNLRKTLLVHQASEGLFDNDTGALLSLGREMFRLEILEDIARDKVRTLHFVDEIEVYLAFQTMLAEKLQLSTAVKEMRFYGVSGVTANDLRTAEAMVRSREENEFKDWFSLWGPWHAVLKRTEADRWAQAEEQKYEMLENEYPQRVADRLKASGLSGDADAEREAGAQVMRETEQLIYRQLTDEVLALRLSENGSQLHHS.

The tract at residues 1-242 (MLPINNNFSL…YHGPRIYFSM (242 aa)) is interaction with target proteins. LRR repeat units lie at residues 57 to 77 (NSDELRLDRLNLSSLPDNLPA), 78 to 99 (QITLLNVSYNQLTNLPELPVTL), 100 to 117 (KKLYSASNKLSELPVLPP), 118 to 139 (ALESLQVQHNELENLPALPDSL), 140 to 157 (LTMNISYNEIVSLPSLPQ), 158 to 179 (ALKNLRATRNFLTELPAFSEGN), 182 to 203 (VVREYFFDRNQISHIPESILNL), and 205 to 228 (NECSIHISDNPLSSHALQALQRLT). Positions 243–250 (SDGQQNTL) are linker. The tract at residues 251-545 (HRPLADAVTA…SENGSQLHHS (295 aa)) is E3 ubiquitin-protein ligase catalytic domain. In terms of domain architecture, NEL spans 253-545 (PLADAVTAWF…SENGSQLHHS (293 aa)). C337 serves as the catalytic Glycyl thioester intermediate.

It belongs to the LRR-containing bacterial E3 ligase family. In terms of assembly, also interacts with human and mouse U2AF1 (U2AF35). Post-translationally, ubiquitinated in the presence of host E1 ubiquitin-activating enzyme, E2 ubiquitin-conjugating enzyme and ubiquitin.

Its subcellular location is the secreted. It is found in the host cytoplasm. The protein resides in the host nucleus. It catalyses the reaction S-ubiquitinyl-[E2 ubiquitin-conjugating enzyme]-L-cysteine + [acceptor protein]-L-lysine = [E2 ubiquitin-conjugating enzyme]-L-cysteine + N(6)-ubiquitinyl-[acceptor protein]-L-lysine.. With respect to regulation, exists in an autoinhibited state in the absence of substrate protein, due to interactions of the leucine-rich repeats with NEL domain. Is activated upon binding to a substrate protein. In terms of biological role, effector E3 ubiquitin ligase that interferes with host's ubiquitination pathway and modulates the acute inflammatory responses, thus facilitating bacterial colonization within the host cell. Interacts with IKBKG (NEMO) and TNIP1 (ABIN-1), a ubiquitin-binding adapter protein, which results in TNIP1-dependent 'Lys-27'-linked polyubiquitination of IKBKG. Consequently, polyubiquitinated IKBKG undergoes proteasome-dependent degradation, which perturbs NF-kappa-B activation during bacterial infection. Mediates polyubiquitination of host U2AF1, leading to its proteasomal degradation. Catalyzes 'Lys-48'-linked polyubiquitination and subsequent degradation of a subset of host guanylate-binding proteins (GBP1, GBP2, GBP4 and GBP6), thereby suppressing host cell defense. In contrast, host GBP3 and GBP7 are not ubiquitinated by IpaH9.8. Uses UBE2D2 (UBCH5B) as an E2 ubiquitin-conjugating enzyme. The chain is E3 ubiquitin-protein ligase ipaH9.8 (ipaH9.8) from Shigella boydii serotype 18 (strain CDC 3083-94 / BS512).